The chain runs to 542 residues: MAKILKFDEDARRALERGVNKLADTVKVTIGPKGRNVVIDKKFGAPTITNDGVTIAREVEVEDPYENLGAQLVKEVATKTNDIAGDGTTTATVLAQALVREGLKNVAAGASPALLKKGIDAAVKAVSEELLATARPIDEKSDIAAVAGLSAQDSQVGELIAEAMDKVGKDGVITVEESNTFGLELDFTEGMAFDKGYLSPYFVTDQERMEAVLEDPYILIHQGKISSIQDLLPLLEKVIQANASKPLLIIAEDVEGEALSTLVVNKIRGTFNAVAVKAPGFGDRRKAMLGDIATLTGGQVIAEEVGLKLDQVGLDVLGTARRVTVTKDDTTIVDGGGSSDEVAGRINQIKAEIENTDSDWDREKLQERLAKLAGGVCVIKVGAATEVELKEKKHRLEDAISATRAAVEEGIVSGGGSALVHAVKVLEGNLGKTGDEATGVAVVRRAAVEPLRWIAENAGLEGYVITSKVAELDKGQGFNAATGEYGDLVKSGVIDPVKVTRSALENAASIASLLLTTETLVVEKPAEEEADAGHGHGHGHSH.

ATP is bound by residues 29-32, 86-90, Gly415, 479-481, and Asp495; these read TIGP, DGTTT, and NAA.

The protein belongs to the chaperonin (HSP60) family. In terms of assembly, forms a cylinder of 14 subunits composed of two heptameric rings stacked back-to-back. Interacts with the co-chaperonin GroES.

Its subcellular location is the cytoplasm. It carries out the reaction ATP + H2O + a folded polypeptide = ADP + phosphate + an unfolded polypeptide.. Functionally, together with its co-chaperonin GroES, plays an essential role in assisting protein folding. The GroEL-GroES system forms a nano-cage that allows encapsulation of the non-native substrate proteins and provides a physical environment optimized to promote and accelerate protein folding. This Streptomyces avermitilis (strain ATCC 31267 / DSM 46492 / JCM 5070 / NBRC 14893 / NCIMB 12804 / NRRL 8165 / MA-4680) protein is Chaperonin GroEL 1.